Consider the following 199-residue polypeptide: AICSLVLYLLTLMLMEKLSSNSVDAQEVELVWTILPAIVLILLALPSLQILYMMDEIDEPDLTLKAIGHQWYWTYEYTDFKDLSFDSYMIPTSELPLGHFRLLEVDHRVVVPMESPIRVIITAGDVLHSWAVPTLGVKTDAIPGRLNQTSFITTRPGIFYGQCSEICGANHSYMPIVVESTPLPHFENWSSLLSTSSSL.

A helical membrane pass occupies residues 1–13; sequence AICSLVLYLLTLM. Residues 14–26 are Mitochondrial matrix-facing; that stretch reads LMEKLSSNSVDAQ. A helical membrane pass occupies residues 27 to 54; sequence EVELVWTILPAIVLILLALPSLQILYMM. At 55-199 the chain is on the mitochondrial intermembrane side; that stretch reads DEIDEPDLTL…SSLLSTSSSL (145 aa). His-128, Cys-163, Glu-165, Cys-167, His-171, and Met-174 together coordinate Cu cation. Mg(2+) is bound at residue Glu-165.

Belongs to the cytochrome c oxidase subunit 2 family. As to quaternary structure, component of the cytochrome c oxidase (complex IV, CIV), a multisubunit enzyme composed of 14 subunits. The complex is composed of a catalytic core of 3 subunits MT-CO1, MT-CO2 and MT-CO3, encoded in the mitochondrial DNA, and 11 supernumerary subunits COX4I, COX5A, COX5B, COX6A, COX6B, COX6C, COX7A, COX7B, COX7C, COX8 and NDUFA4, which are encoded in the nuclear genome. The complex exists as a monomer or a dimer and forms supercomplexes (SCs) in the inner mitochondrial membrane with NADH-ubiquinone oxidoreductase (complex I, CI) and ubiquinol-cytochrome c oxidoreductase (cytochrome b-c1 complex, complex III, CIII), resulting in different assemblies (supercomplex SCI(1)III(2)IV(1) and megacomplex MCI(2)III(2)IV(2)). Found in a complex with TMEM177, COA6, COX18, COX20, SCO1 and SCO2. Interacts with TMEM177 in a COX20-dependent manner. Interacts with COX20. Interacts with COX16. The cofactor is Cu cation.

The protein resides in the mitochondrion inner membrane. It carries out the reaction 4 Fe(II)-[cytochrome c] + O2 + 8 H(+)(in) = 4 Fe(III)-[cytochrome c] + 2 H2O + 4 H(+)(out). Functionally, component of the cytochrome c oxidase, the last enzyme in the mitochondrial electron transport chain which drives oxidative phosphorylation. The respiratory chain contains 3 multisubunit complexes succinate dehydrogenase (complex II, CII), ubiquinol-cytochrome c oxidoreductase (cytochrome b-c1 complex, complex III, CIII) and cytochrome c oxidase (complex IV, CIV), that cooperate to transfer electrons derived from NADH and succinate to molecular oxygen, creating an electrochemical gradient over the inner membrane that drives transmembrane transport and the ATP synthase. Cytochrome c oxidase is the component of the respiratory chain that catalyzes the reduction of oxygen to water. Electrons originating from reduced cytochrome c in the intermembrane space (IMS) are transferred via the dinuclear copper A center (CU(A)) of subunit 2 and heme A of subunit 1 to the active site in subunit 1, a binuclear center (BNC) formed by heme A3 and copper B (CU(B)). The BNC reduces molecular oxygen to 2 water molecules using 4 electrons from cytochrome c in the IMS and 4 protons from the mitochondrial matrix. In Apteryx australis (Southern brown kiwi), this protein is Cytochrome c oxidase subunit 2 (MT-CO2).